Consider the following 209-residue polypeptide: Imidazole glycerol phosphate synthase subunit HisH (209 aa).

A Glutamine amidotransferase type-1 domain is found at 1–205; it reads MIAIIDYGMG…KGVVETWKSS (205 aa). Residue Cys-79 is the Nucleophile of the active site. Residues His-180 and Glu-182 contribute to the active site.

Heterodimer of HisH and HisF.

It is found in the cytoplasm. It carries out the reaction 5-[(5-phospho-1-deoxy-D-ribulos-1-ylimino)methylamino]-1-(5-phospho-beta-D-ribosyl)imidazole-4-carboxamide + L-glutamine = D-erythro-1-(imidazol-4-yl)glycerol 3-phosphate + 5-amino-1-(5-phospho-beta-D-ribosyl)imidazole-4-carboxamide + L-glutamate + H(+). The enzyme catalyses L-glutamine + H2O = L-glutamate + NH4(+). Its pathway is amino-acid biosynthesis; L-histidine biosynthesis; L-histidine from 5-phospho-alpha-D-ribose 1-diphosphate: step 5/9. IGPS catalyzes the conversion of PRFAR and glutamine to IGP, AICAR and glutamate. The HisH subunit catalyzes the hydrolysis of glutamine to glutamate and ammonia as part of the synthesis of IGP and AICAR. The resulting ammonia molecule is channeled to the active site of HisF. The polypeptide is Imidazole glycerol phosphate synthase subunit HisH (Bacillus anthracis (strain A0248)).